The primary structure comprises 667 residues: Primary amine oxidase (667 aa).

The first 18 residues, 1-18 (KFALFSVLTLLSFHAVFS), serve as a signal peptide directing secretion. The N-linked (GlcNAc...) asparagine glycan is linked to asparagine 149. A disulfide bridge connects residues cysteine 155 and cysteine 176. The interval 216–246 (PTAENTEYQVSKQSPPFGPKQHSLTSHQPQG) is disordered. The segment covering 218 to 229 (AENTEYQVSKQS) has biased composition (polar residues). Asparagine 252 carries N-linked (GlcNAc...) asparagine glycosylation. Position 316–327 (316–327 (FFDSGEFGFGLS)) interacts with substrate. The active-site Proton acceptor is aspartate 318. Cysteine 337 and cysteine 363 are joined by a disulfide. The N-linked (GlcNAc...) asparagine glycan is linked to asparagine 382. A substrate-binding site is contributed by 402–407 (VGNYDN). Catalysis depends on tyrosine 405, which acts as the Schiff-base intermediate with substrate; via topaquinone. Tyrosine 405 carries the post-translational modification 2',4',5'-topaquinone. Cu cation is bound by residues histidine 460 and histidine 462. Aspartate 469, phenylalanine 470, and aspartate 471 together coordinate Mn(2+). Residue asparagine 576 is glycosylated (N-linked (GlcNAc...) asparagine). Aspartate 610 and isoleucine 611 together coordinate Mn(2+). Histidine 621 contributes to the Cu cation binding site.

Belongs to the copper/topaquinone oxidase family. Homodimer. Requires Cu cation as cofactor. It depends on Zn(2+) as a cofactor. L-topaquinone is required as a cofactor. The cofactor is Mn(2+). Glycosylated; contains two carbohydrate chains per monomer. Post-translationally, topaquinone (TPQ) is generated by copper-dependent autoxidation of a specific tyrosyl residue.

It catalyses the reaction a primary methyl amine + O2 + H2O = an aldehyde + H2O2 + NH4(+). This chain is Primary amine oxidase, found in Lens culinaris (Lentil).